A 341-amino-acid chain; its full sequence is S-adenosylmethionine:tRNA ribosyltransferase-isomerase (341 aa).

It belongs to the QueA family. Monomer.

It is found in the cytoplasm. It catalyses the reaction 7-aminomethyl-7-carbaguanosine(34) in tRNA + S-adenosyl-L-methionine = epoxyqueuosine(34) in tRNA + adenine + L-methionine + 2 H(+). Its pathway is tRNA modification; tRNA-queuosine biosynthesis. In terms of biological role, transfers and isomerizes the ribose moiety from AdoMet to the 7-aminomethyl group of 7-deazaguanine (preQ1-tRNA) to give epoxyqueuosine (oQ-tRNA). This is S-adenosylmethionine:tRNA ribosyltransferase-isomerase from Pelodictyon phaeoclathratiforme (strain DSM 5477 / BU-1).